Consider the following 636-residue polypeptide: Probable potassium transport system protein Kup (636 aa).

Helical transmembrane passes span 23–43, 57–77, 111–131, 148–168, 179–199, 217–237, 258–278, 287–307, 348–368, 377–397, 409–429, and 431–451; these read MALM…SPLY, PAHV…VVSL, WLLI…SMIT, HTLE…LFAI, LFGP…GYQI, FIAE…LALT, WFAM…ALLL, PFFL…ATVA, IYLP…VLLF, AYGF…FAVL, WMVL…ANIF, and IHEG…LMMT.

This sequence belongs to the HAK/KUP transporter (TC 2.A.72) family.

It localises to the cell inner membrane. The catalysed reaction is K(+)(in) + H(+)(in) = K(+)(out) + H(+)(out). Its function is as follows. Transport of potassium into the cell. Likely operates as a K(+):H(+) symporter. In Bordetella bronchiseptica (strain ATCC BAA-588 / NCTC 13252 / RB50) (Alcaligenes bronchisepticus), this protein is Probable potassium transport system protein Kup.